The sequence spans 247 residues: Phosphoglycerate mutase 1 (247 aa).

Residues 8 to 15 (RHGQSEWN) and 21 to 22 (TG) each bind substrate. H9 acts as the Tele-phosphohistidine intermediate in catalysis. The residue at position 12 (S12) is a Phosphoserine. Residue K31 forms a Glycyl lysine isopeptide (Lys-Gly) (interchain with G-Cter in ubiquitin) linkage. The residue at position 49 (Y49) is a Phosphotyrosine. A Glycyl lysine isopeptide (Lys-Gly) (interchain with G-Cter in ubiquitin) cross-link involves residue K57. R60 lines the substrate pocket. Residue K71 forms a Glycyl lysine isopeptide (Lys-Gly) (interchain with G-Cter in ubiquitin) linkage. E87 acts as the Proton donor/acceptor in catalysis. Residues 87 to 90 (ERHY), K98, and 114 to 115 (RR) contribute to the substrate site. A phosphoserine mark is found at S116, S127, and S128. Glycyl lysine isopeptide (Lys-Gly) (interchain with G-Cter in ubiquitin) cross-links involve residues K139 and K175. 183–184 (GN) contacts substrate. S185 is subject to Phosphoserine. K191 participates in a covalent cross-link: Glycyl lysine isopeptide (Lys-Gly) (interchain with G-Cter in ubiquitin). Phosphoserine is present on S197.

Belongs to the phosphoglycerate mutase family. BPG-dependent PGAM subfamily. As to quaternary structure, homotetramer: dimer of dimers.

It is found in the cytoplasm. The protein resides in the mitochondrion outer membrane. The protein localises to the mitochondrion intermembrane space. It catalyses the reaction (2R)-2-phosphoglycerate = (2R)-3-phosphoglycerate. It participates in carbohydrate degradation; glycolysis; pyruvate from D-glyceraldehyde 3-phosphate: step 3/5. Its activity is regulated as follows. Inhibited by inositol hexakisphosphate and benzene tri-, tetra- and hexacarboxylates. In terms of biological role, interconversion of 3- and 2-phosphoglycerate with 2,3-bisphosphoglycerate as the primer of the reaction. Can also catalyze the reaction of EC 5.4.2.4 (synthase), but with a reduced activity. The polypeptide is Phosphoglycerate mutase 1 (GPM1) (Saccharomyces cerevisiae (strain ATCC 204508 / S288c) (Baker's yeast)).